Reading from the N-terminus, the 689-residue chain is Elongation factor G (689 aa).

In terms of domain architecture, tr-type G spans 8 to 283; it reads SKCRNIGIMA…AVVDFLPAPN (276 aa). Residues 17–24, 81–85, and 135–138 each bind GTP; these read AHIDAGKT, DTPGH, and NKMD.

This sequence belongs to the TRAFAC class translation factor GTPase superfamily. Classic translation factor GTPase family. EF-G/EF-2 subfamily.

It localises to the cytoplasm. Its function is as follows. Catalyzes the GTP-dependent ribosomal translocation step during translation elongation. During this step, the ribosome changes from the pre-translocational (PRE) to the post-translocational (POST) state as the newly formed A-site-bound peptidyl-tRNA and P-site-bound deacylated tRNA move to the P and E sites, respectively. Catalyzes the coordinated movement of the two tRNA molecules, the mRNA and conformational changes in the ribosome. The protein is Elongation factor G of Ehrlichia ruminantium (strain Welgevonden).